A 545-amino-acid polypeptide reads, in one-letter code: MAAKDVVYSDVARNELLAGVEKLADAVRVTMGPKGRNVLLQRSFGAPHITKDGVSVAKEIELKHPVENMGAQLVKEVASKTADEAGDGTTTATVLAHAVFKEGLKYITAGANPVAVKRGMDKAVEAIIAELKKMSKTVENKEQIAQVATISANNDKKIGELIAEAMDKVGKDGVITVEEGKSLQDELEVVEGMQFDRGYLSPYFVTDTEKMVAELNDAYILLYDKKISNMKDLLPLLEQMVQAGNKPLLIIAEDIEGEALATLVVNKLRGVLNVCAVKAPGFGDRRKAMLQDIAILTGGQVISEELGRTLESATLADLGQAGRVVVDKENTTIVDGRGDKAAIEARIAQIKKEIEETTSDYDREKLQERLAKLSGGVAVIKVGAATETEMKEKKDRVDDALSATKAAVEEGIVIGGGAAILKAAKNISVNVEDADEKIGVDIVKQAVKAPIKQIAKNAGFEPGIVAMKVEEADENTGFNAATGEYVDMFKAGIIDPTKVERIALQNAVSVGSLLLTTEAAVTEVPEDKPAPAAPDMGGMGGMGMM.

ATP-binding positions include 30-33 (TMGP), K51, 87-91 (DGTTT), G416, 479-481 (NAA), and D495.

It belongs to the chaperonin (HSP60) family. As to quaternary structure, forms a cylinder of 14 subunits composed of two heptameric rings stacked back-to-back. Interacts with the co-chaperonin GroES.

It localises to the cytoplasm. The enzyme catalyses ATP + H2O + a folded polypeptide = ADP + phosphate + an unfolded polypeptide.. Together with its co-chaperonin GroES, plays an essential role in assisting protein folding. The GroEL-GroES system forms a nano-cage that allows encapsulation of the non-native substrate proteins and provides a physical environment optimized to promote and accelerate protein folding. The protein is Chaperonin GroEL of Nautilia profundicola (strain ATCC BAA-1463 / DSM 18972 / AmH).